The sequence spans 278 residues: MELKNIIFDLDGTLLSSNQIPLEQTVEFLKDLQKKGIRITFASGRSHILIRNTATFITPNLPVISSNGALVYDFASEKPVHIKPIDNKVIPAIMQMLLEFQETFYFYTDKKVFAFTHELDSAKILSTRSQIVGIDLIENNYIVNKFEKALDFDFKQHTITKILLVTKNREKVPFLAKQLDQIQDINYVSSMTFALDIMQKDVNKAYGLKVLVDNYNLDPEKTMVFGDADNDVEIFQSVKWPVALVNGTDLAKKNAKFITEYDNNHNGIYFFLKKFLAT.

Asp9 functions as the Nucleophile in the catalytic mechanism. Asp9 contacts Mg(2+). Leu10 serves as a coordination point for phosphate. Asp11 serves as a coordination point for Mg(2+). Residues Ser43 to Gly44 and Lys204 contribute to the phosphate site. Asp227 is a binding site for Mg(2+). A phosphate-binding site is contributed by Asn230.

Belongs to the HAD-like hydrolase superfamily. Cof family. It depends on Mg(2+) as a cofactor.

This Mycoplasma genitalium (strain ATCC 33530 / DSM 19775 / NCTC 10195 / G37) (Mycoplasmoides genitalium) protein is Putative phosphatase MG265.